The following is a 325-amino-acid chain: Eukaryotic translation initiation factor 3 subunit I (325 aa).

WD repeat units follow at residues 8–47 (GHER…RLGT), 50–91 (GHTG…ALLK), 144–183 (CNDS…VLVN), and 186–225 (EHSR…HQKT). Lysine 264 is modified (N6-acetyllysine). Lysine 282 participates in a covalent cross-link: Glycyl lysine isopeptide (Lys-Gly) (interchain with G-Cter in ubiquitin). Residues 283–324 (GHFGPINSVAFHPDGKSYSSGGEDGYVRIHYFDPQYFEFEFE) form a WD 5 repeat. At tyrosine 308 the chain carries Phosphotyrosine.

Belongs to the eIF-3 subunit I family. As to quaternary structure, component of the eukaryotic translation initiation factor 3 (eIF-3) complex, which is composed of 13 subunits: EIF3A, EIF3B, EIF3C, EIF3D, EIF3E, EIF3F, EIF3G, EIF3H, EIF3I, EIF3J, EIF3K, EIF3L and EIF3M. The eIF-3 complex appears to include 3 stable modules: module A is composed of EIF3A, EIF3B, EIF3G and EIF3I; module B is composed of EIF3F, EIF3H, and EIF3M; and module C is composed of EIF3C, EIF3D, EIF3E, EIF3K and EIF3L. EIF3C of module C binds EIF3B of module A and EIF3H of module B, thereby linking the three modules. EIF3J is a labile subunit that binds to the eIF-3 complex via EIF3B. The eIF-3 complex interacts with RPS6KB1 under conditions of nutrient depletion. Mitogenic stimulation leads to binding and activation of a complex composed of MTOR and RPTOR, leading to phosphorylation and release of RPS6KB1 and binding of EIF4B to eIF-3. Post-translationally, phosphorylated by TGF-beta type II receptor.

Its subcellular location is the cytoplasm. Functionally, component of the eukaryotic translation initiation factor 3 (eIF-3) complex, which is required for several steps in the initiation of protein synthesis. The eIF-3 complex associates with the 40S ribosome and facilitates the recruitment of eIF-1, eIF-1A, eIF-2:GTP:methionyl-tRNAi and eIF-5 to form the 43S pre-initiation complex (43S PIC). The eIF-3 complex stimulates mRNA recruitment to the 43S PIC and scanning of the mRNA for AUG recognition. The eIF-3 complex is also required for disassembly and recycling of post-termination ribosomal complexes and subsequently prevents premature joining of the 40S and 60S ribosomal subunits prior to initiation. The eIF-3 complex specifically targets and initiates translation of a subset of mRNAs involved in cell proliferation, including cell cycling, differentiation and apoptosis, and uses different modes of RNA stem-loop binding to exert either translational activation or repression. The sequence is that of Eukaryotic translation initiation factor 3 subunit I (Eif3i) from Rattus norvegicus (Rat).